The chain runs to 354 residues: UDP-N-acetylglucosamine--N-acetylmuramyl-(pentapeptide) pyrophosphoryl-undecaprenol N-acetylglucosamine transferase (354 aa).

Residues 15 to 17, asparagine 127, arginine 163, serine 191, isoleucine 242, 261 to 266, and glutamine 286 contribute to the UDP-N-acetyl-alpha-D-glucosamine site; these read TGG and ALTVSE.

This sequence belongs to the glycosyltransferase 28 family. MurG subfamily.

It localises to the cell inner membrane. It catalyses the reaction di-trans,octa-cis-undecaprenyl diphospho-N-acetyl-alpha-D-muramoyl-L-alanyl-D-glutamyl-meso-2,6-diaminopimeloyl-D-alanyl-D-alanine + UDP-N-acetyl-alpha-D-glucosamine = di-trans,octa-cis-undecaprenyl diphospho-[N-acetyl-alpha-D-glucosaminyl-(1-&gt;4)]-N-acetyl-alpha-D-muramoyl-L-alanyl-D-glutamyl-meso-2,6-diaminopimeloyl-D-alanyl-D-alanine + UDP + H(+). Its pathway is cell wall biogenesis; peptidoglycan biosynthesis. Its function is as follows. Cell wall formation. Catalyzes the transfer of a GlcNAc subunit on undecaprenyl-pyrophosphoryl-MurNAc-pentapeptide (lipid intermediate I) to form undecaprenyl-pyrophosphoryl-MurNAc-(pentapeptide)GlcNAc (lipid intermediate II). The polypeptide is UDP-N-acetylglucosamine--N-acetylmuramyl-(pentapeptide) pyrophosphoryl-undecaprenol N-acetylglucosamine transferase (Pasteurella multocida (strain Pm70)).